Reading from the N-terminus, the 599-residue chain is Elongation factor 4 (599 aa).

The region spanning 5–187 (KNIRNFSIIA…QLVERIPAPE (183 aa)) is the tr-type G domain. GTP-binding positions include 17 to 22 (DHGKST) and 134 to 137 (NKID).

It belongs to the TRAFAC class translation factor GTPase superfamily. Classic translation factor GTPase family. LepA subfamily.

The protein resides in the cell inner membrane. It catalyses the reaction GTP + H2O = GDP + phosphate + H(+). Its function is as follows. Required for accurate and efficient protein synthesis under certain stress conditions. May act as a fidelity factor of the translation reaction, by catalyzing a one-codon backward translocation of tRNAs on improperly translocated ribosomes. Back-translocation proceeds from a post-translocation (POST) complex to a pre-translocation (PRE) complex, thus giving elongation factor G a second chance to translocate the tRNAs correctly. Binds to ribosomes in a GTP-dependent manner. The sequence is that of Elongation factor 4 from Alcanivorax borkumensis (strain ATCC 700651 / DSM 11573 / NCIMB 13689 / SK2).